Consider the following 121-residue polypeptide: Small ribosomal subunit protein uS13 (121 aa).

Residues 96-121 (PVRGQNTKNNARTRKGKAVAIAGKKK) form a disordered region. Positions 106 to 121 (ARTRKGKAVAIAGKKK) are enriched in basic residues.

It belongs to the universal ribosomal protein uS13 family. As to quaternary structure, part of the 30S ribosomal subunit. Forms a loose heterodimer with protein S19. Forms two bridges to the 50S subunit in the 70S ribosome.

Located at the top of the head of the 30S subunit, it contacts several helices of the 16S rRNA. In the 70S ribosome it contacts the 23S rRNA (bridge B1a) and protein L5 of the 50S subunit (bridge B1b), connecting the 2 subunits; these bridges are implicated in subunit movement. Contacts the tRNAs in the A and P-sites. This is Small ribosomal subunit protein uS13 from Streptococcus pyogenes serotype M3 (strain SSI-1).